The chain runs to 372 residues: Cytochrome b (372 aa).

Transmembrane regions (helical) follow at residues 25–45, 69–90, 105–125, and 170–190; these read FGSMLLTCLAMQTLTGFFLAI, WTMQNLHAIGASMFFICIYIHI, WLSGITLLITLMATAFFGYVL, and FFALHFILPFIIISLTSIHII. 2 residues coordinate heme b: His75 and His89. 2 residues coordinate heme b: His174 and His188. Residue His193 participates in a ubiquinone binding. Helical transmembrane passes span 218-238, 280-300, 312-332, and 339-358; these read YKDMLMVTTMITLLFLILSFS, LGGTLALLMSIAILMTTPFTH, LTQILFWTLVATFITLTWTAT, and FIIISQMTSIFYFFFFIMNP.

This sequence belongs to the cytochrome b family. In terms of assembly, the cytochrome bc1 complex contains 3 respiratory subunits (MT-CYB, CYC1 and UQCRFS1), 2 core proteins (UQCRC1 and UQCRC2) and probably 6 low-molecular weight proteins. Heme b serves as cofactor.

It is found in the mitochondrion inner membrane. In terms of biological role, component of the ubiquinol-cytochrome c reductase complex (complex III or cytochrome b-c1 complex) that is part of the mitochondrial respiratory chain. The b-c1 complex mediates electron transfer from ubiquinol to cytochrome c. Contributes to the generation of a proton gradient across the mitochondrial membrane that is then used for ATP synthesis. This Ophiophagus hannah (King cobra) protein is Cytochrome b (MT-CYB).